The following is a 187-amino-acid chain: MIKLIVGLGNPGPQYAVTRHNAGFMIVDNLAVKLGVNFNAYKNLGEYVKTTIGGQDVFLAKPLTFMNLSGRMVTHLAGFYKIKPQEILVCFDDISINLGAVRIRKDGSAGGQNGMKNIIELFGTQDIPRLRFGVGPKPERFDSADYVLSKFSKSDEKLLNESIEAAVEAAESCVKDGLERAMNKFNK.

TRNA is bound at residue Tyr-15. His-20 serves as the catalytic Proton acceptor. The tRNA site is built by Phe-65, Asn-67, and Asn-113.

This sequence belongs to the PTH family. Monomer.

Its subcellular location is the cytoplasm. The enzyme catalyses an N-acyl-L-alpha-aminoacyl-tRNA + H2O = an N-acyl-L-amino acid + a tRNA + H(+). Hydrolyzes ribosome-free peptidyl-tRNAs (with 1 or more amino acids incorporated), which drop off the ribosome during protein synthesis, or as a result of ribosome stalling. In terms of biological role, catalyzes the release of premature peptidyl moieties from peptidyl-tRNA molecules trapped in stalled 50S ribosomal subunits, and thus maintains levels of free tRNAs and 50S ribosomes. The sequence is that of Peptidyl-tRNA hydrolase from Elusimicrobium minutum (strain Pei191).